Reading from the N-terminus, the 556-residue chain is Membrane protein insertase YidC (556 aa).

Transmembrane regions (helical) follow at residues 6 to 26, 332 to 352, 358 to 378, 428 to 448, and 501 to 521; these read IVLY…WQID, LDLT…FSLM, VVGN…LAFY, LGGC…YWVL, and VMMF…SGLV.

This sequence belongs to the OXA1/ALB3/YidC family. Type 1 subfamily. In terms of assembly, interacts with the Sec translocase complex via SecD. Specifically interacts with transmembrane segments of nascent integral membrane proteins during membrane integration.

The protein localises to the cell inner membrane. Its function is as follows. Required for the insertion and/or proper folding and/or complex formation of integral membrane proteins into the membrane. Involved in integration of membrane proteins that insert both dependently and independently of the Sec translocase complex, as well as at least some lipoproteins. Aids folding of multispanning membrane proteins. The sequence is that of Membrane protein insertase YidC from Legionella pneumophila (strain Lens).